Here is a 286-residue protein sequence, read N- to C-terminus: Forkhead box protein E3 (286 aa).

The segment at Met1 to Arg62 is disordered. A DNA-binding region (fork-head) is located at residues Lys64 to Lys158.

Its subcellular location is the nucleus. Functionally, transcription factor that controls lens epithelial cell growth through regulation of proliferation, apoptosis and cell cycle. During lens development, controls the ratio of the lens fiber cells to the cells of the anterior lens epithelium by regulating the rate of proliferation and differentiation. Controls lens vesicle closure and subsequent separation of the lens vesicle from ectoderm. Controls the expression of DNAJB1 in a pathway that is crucial for the development of the anterior segment of the eye. The chain is Forkhead box protein E3 (Foxe3) from Rattus norvegicus (Rat).